A 287-amino-acid chain; its full sequence is 4-hydroxybenzoate octaprenyltransferase (287 aa).

Transmembrane regions (helical) follow at residues 30-50, 92-112, 133-153, 158-178, 207-227, 232-252, and 266-286; these read ALWI…FALG, IAIA…LNGL, FFAI…PMAF, DTVP…SVAY, VLAI…LGAA, WPYW…YTLI, and HNNW…ALAV.

This sequence belongs to the UbiA prenyltransferase family. Mg(2+) serves as cofactor.

The protein resides in the cell inner membrane. The catalysed reaction is all-trans-octaprenyl diphosphate + 4-hydroxybenzoate = 4-hydroxy-3-(all-trans-octaprenyl)benzoate + diphosphate. It functions in the pathway cofactor biosynthesis; ubiquinone biosynthesis. Catalyzes the prenylation of para-hydroxybenzoate (PHB) with an all-trans polyprenyl group. Mediates the second step in the final reaction sequence of ubiquinone-8 (UQ-8) biosynthesis, which is the condensation of the polyisoprenoid side chain with PHB, generating the first membrane-bound Q intermediate 3-octaprenyl-4-hydroxybenzoate. The sequence is that of 4-hydroxybenzoate octaprenyltransferase from Burkholderia mallei (strain NCTC 10247).